The chain runs to 406 residues: Tryptophan synthase beta chain (406 aa).

An N6-(pyridoxal phosphate)lysine modification is found at K99.

It belongs to the TrpB family. As to quaternary structure, tetramer of two alpha and two beta chains. Pyridoxal 5'-phosphate serves as cofactor.

It carries out the reaction (1S,2R)-1-C-(indol-3-yl)glycerol 3-phosphate + L-serine = D-glyceraldehyde 3-phosphate + L-tryptophan + H2O. The protein operates within amino-acid biosynthesis; L-tryptophan biosynthesis; L-tryptophan from chorismate: step 5/5. Its function is as follows. The beta subunit is responsible for the synthesis of L-tryptophan from indole and L-serine. This Agrobacterium fabrum (strain C58 / ATCC 33970) (Agrobacterium tumefaciens (strain C58)) protein is Tryptophan synthase beta chain (trpB).